Here is a 366-residue protein sequence, read N- to C-terminus: Outer membrane protein IIIA (366 aa).

A signal peptide spans 1–22 (MNIRMVLLASAAAFAASTPVLA).

The protein belongs to the alphaproteobacteria porin family. Forms calcium-stabilized oligomers. Post-translationally, attached covalently to peptidoglycan.

It localises to the cell outer membrane. May act as an outer membrane pore. The protein is Outer membrane protein IIIA (ropA) of Rhizobium leguminosarum bv. viciae.